Here is a 196-residue protein sequence, read N- to C-terminus: FMN-dependent NADH:quinone oxidoreductase (196 aa).

S10 provides a ligand contact to FMN.

This sequence belongs to the azoreductase type 1 family. As to quaternary structure, homodimer. Requires FMN as cofactor.

The catalysed reaction is 2 a quinone + NADH + H(+) = 2 a 1,4-benzosemiquinone + NAD(+). It catalyses the reaction N,N-dimethyl-1,4-phenylenediamine + anthranilate + 2 NAD(+) = 2-(4-dimethylaminophenyl)diazenylbenzoate + 2 NADH + 2 H(+). In terms of biological role, quinone reductase that provides resistance to thiol-specific stress caused by electrophilic quinones. Functionally, also exhibits azoreductase activity. Catalyzes the reductive cleavage of the azo bond in aromatic azo compounds to the corresponding amines. The chain is FMN-dependent NADH:quinone oxidoreductase from Cereibacter sphaeroides (strain ATCC 17023 / DSM 158 / JCM 6121 / CCUG 31486 / LMG 2827 / NBRC 12203 / NCIMB 8253 / ATH 2.4.1.) (Rhodobacter sphaeroides).